The primary structure comprises 299 residues: Regucalcin (299 aa).

A divalent metal cation is bound at residue glutamate 18. 3 residues coordinate substrate: arginine 101, asparagine 103, and glutamate 121. A divalent metal cation contacts are provided by asparagine 154 and aspartate 204. The active-site Proton donor/acceptor is aspartate 204.

The protein belongs to the SMP-30/CGR1 family. It depends on Zn(2+) as a cofactor. Mn(2+) is required as a cofactor. Ca(2+) serves as cofactor. The cofactor is Mg(2+).

The protein localises to the cytoplasm. It catalyses the reaction D-glucono-1,5-lactone + H2O = D-gluconate + H(+). It participates in cofactor biosynthesis; L-ascorbate biosynthesis via UDP-alpha-D-glucuronate pathway; L-ascorbate from UDP-alpha-D-glucuronate: step 3/4. Its function is as follows. Gluconolactonase with low activity towards other sugar lactones, including gulonolactone and galactonolactone. Catalyzes a key step in ascorbic acid (vitamin C) biosynthesis. Can also hydrolyze diisopropyl phosphorofluoridate and phenylacetate (in vitro). Calcium-binding protein. Modulates Ca(2+) signaling, and Ca(2+)-dependent cellular processes and enzyme activities. The protein is Regucalcin of Gallus gallus (Chicken).